Here is a 574-residue protein sequence, read N- to C-terminus: Galactose transporter (574 aa).

Positions 1 to 57 (MAVEENNMPVVSQQPQAGEDVISSLSKDSHLSAQSQKYSNDELKAGESGSEGSQSVP) are disordered. The Cytoplasmic segment spans residues 1–70 (MAVEENNMPV…PKKPMSEYVT (70 aa)). Residues 23–38 (SSLSKDSHLSAQSQKY) are compositionally biased toward polar residues. S32, S35, S39, S48, S50, S53, and S55 each carry phosphoserine. A helical transmembrane segment spans residues 71 to 91 (VSLLCLCVAFGGFMFGWDTGT). The Extracellular segment spans residues 92-121 (ISGFVVQTDFLRRFGMKHKDGTHYLSNVRT). A helical membrane pass occupies residues 122–142 (GLIVAIFNIGCAFGGIILSKG). Residues 143 to 149 (GDMYGRK) lie on the Cytoplasmic side of the membrane. The chain crosses the membrane as a helical span at residues 150–170 (KGLSIVVSVYIVGIIIQIASI). Topologically, residues 171 to 175 (NKWYQ) are extracellular. Residues 176 to 196 (YFIGRIISGLGVGGIAVLCPM) form a helical membrane-spanning segment. Residues 197–207 (LISEIAPKHLR) are Cytoplasmic-facing. Residues 208-228 (GTLVSCYQLMITAGIFLGYCT) traverse the membrane as a helical segment. Residues 229–242 (NYGTKSYSNSVQWR) lie on the Extracellular side of the membrane. Residues 243-263 (VPLGLCFAWSLFMIGALTLVP) form a helical membrane-spanning segment. At 264-342 (ESPRYLCEVN…MGVFVQMFQQ (79 aa)) the chain is on the cytoplasmic side. The chain crosses the membrane as a helical span at residues 343–362 (LTGNNYFFYYGTVIFKSVGL). Topologically, residues 363–366 (DDSF) are extracellular. The helical transmembrane segment at 367–387 (ETSIVIGVVNFASTFFSLWTV) threads the bilayer. Residues 388-394 (ENLGHRK) are Cytoplasmic-facing. A helical membrane pass occupies residues 395-415 (CLLLGAATMMACMVIYASVGV). Topologically, residues 416-435 (TRLYPHGKSQPSSKGAGNCM) are extracellular. A helical membrane pass occupies residues 436 to 456 (IVFTCFYIFCYATTWAPVAWV). At 457-472 (ITAESFPLRVKSKCMA) the chain is on the cytoplasmic side. The helical transmembrane segment at 473–493 (LASASNWVWGFLIAFFTPFIT) threads the bilayer. Over 494-499 (SAINFY) the chain is Extracellular. Residues 500 to 520 (YGYVFMGCLVAMFFYVFFFVP) traverse the membrane as a helical segment. Residues 521–574 (ETKGLSLEEIQELWEEGVLPWKSEGWIPSSRRGNNYDLEDLQHDDKPWYKAMLE) are Cytoplasmic-facing.

This sequence belongs to the major facilitator superfamily. Sugar transporter (TC 2.A.1.1) family.

The protein localises to the membrane. GAL2 is a facilitated diffusion transporter required for both the high-affinity galactokinase-dependent and low-affinity galactokinase-independent galactose transport processes. The chain is Galactose transporter (GAL2) from Saccharomyces cerevisiae (strain ATCC 204508 / S288c) (Baker's yeast).